Reading from the N-terminus, the 428-residue chain is Elongation factor 1-alpha (428 aa).

The tr-type G domain maps to 5-225 (KPILNVAFIG…DAFQPPEKPT (221 aa)). The tract at residues 14-21 (GHVDAGKS) is G1. Residue 14 to 21 (GHVDAGKS) coordinates GTP. S21 contacts Mg(2+). A G2 region spans residues 70–74 (GVTID). A G3 region spans residues 91–94 (DCPG). GTP-binding positions include 91–95 (DCPGH) and 149–152 (NKMD). The tract at residues 149-152 (NKMD) is G4. Positions 189 to 191 (ASL) are G5.

Belongs to the TRAFAC class translation factor GTPase superfamily. Classic translation factor GTPase family. EF-Tu/EF-1A subfamily.

It is found in the cytoplasm. The catalysed reaction is GTP + H2O = GDP + phosphate + H(+). Functionally, GTP hydrolase that promotes the GTP-dependent binding of aminoacyl-tRNA to the A-site of ribosomes during protein biosynthesis. This Methanococcus maripaludis (strain C5 / ATCC BAA-1333) protein is Elongation factor 1-alpha.